Reading from the N-terminus, the 472-residue chain is uncharacterized protein (472 aa).

It belongs to the IIV-6 198R family.

This is an uncharacterized protein from Acheta domesticus (House cricket).